A 275-amino-acid polypeptide reads, in one-letter code: Formamidopyrimidine-DNA glycosylase (275 aa).

Pro2 acts as the Schiff-base intermediate with DNA in catalysis. The Proton donor role is filled by Glu3. Lys58 functions as the Proton donor; for beta-elimination activity in the catalytic mechanism. 3 residues coordinate DNA: His91, Arg109, and Lys154. The FPG-type zinc finger occupies 240 to 274 (AVYERAGLACRVCGTPIRRLVQGQRATYFCPHCQK). The active-site Proton donor; for delta-elimination activity is the Arg264.

The protein belongs to the FPG family. In terms of assembly, monomer. Zn(2+) serves as cofactor.

It carries out the reaction Hydrolysis of DNA containing ring-opened 7-methylguanine residues, releasing 2,6-diamino-4-hydroxy-5-(N-methyl)formamidopyrimidine.. It catalyses the reaction 2'-deoxyribonucleotide-(2'-deoxyribose 5'-phosphate)-2'-deoxyribonucleotide-DNA = a 3'-end 2'-deoxyribonucleotide-(2,3-dehydro-2,3-deoxyribose 5'-phosphate)-DNA + a 5'-end 5'-phospho-2'-deoxyribonucleoside-DNA + H(+). Functionally, involved in base excision repair of DNA damaged by oxidation or by mutagenic agents. Acts as a DNA glycosylase that recognizes and removes damaged bases. Has a preference for oxidized purines, such as 7,8-dihydro-8-oxoguanine (8-oxoG). Has AP (apurinic/apyrimidinic) lyase activity and introduces nicks in the DNA strand. Cleaves the DNA backbone by beta-delta elimination to generate a single-strand break at the site of the removed base with both 3'- and 5'-phosphates. The protein is Formamidopyrimidine-DNA glycosylase of Bordetella avium (strain 197N).